We begin with the raw amino-acid sequence, 238 residues long: Type III pantothenate kinase (238 aa).

7-14 (DAGNSGLK) is an ATP binding site. Substrate-binding positions include Tyr-88 and 95–98 (GVDR). Asp-97 serves as the catalytic Proton acceptor. Asp-117 provides a ligand contact to K(+). Residue Thr-120 coordinates ATP. Thr-172 is a substrate binding site.

This sequence belongs to the type III pantothenate kinase family. Homodimer. It depends on NH4(+) as a cofactor. K(+) is required as a cofactor.

The protein resides in the cytoplasm. The catalysed reaction is (R)-pantothenate + ATP = (R)-4'-phosphopantothenate + ADP + H(+). The protein operates within cofactor biosynthesis; coenzyme A biosynthesis; CoA from (R)-pantothenate: step 1/5. In terms of biological role, catalyzes the phosphorylation of pantothenate (Pan), the first step in CoA biosynthesis. This is Type III pantothenate kinase from Hahella chejuensis (strain KCTC 2396).